A 270-amino-acid polypeptide reads, in one-letter code: UBX domain-containing protein 8 (270 aa).

Position 1 (methionine 1) is a topological domain, cytoplasmic. Residues 2 to 22 (ASRGVVGIFFLSAVPLVCLEL) traverse the membrane as a helical segment. Topologically, residues 23–33 (RRGIPDIGIKD) are lumenal. The helical transmembrane segment at 34–54 (FLLLCGRILLLLALLTLIISV) threads the bilayer. Residues 55–270 (TTSWLNSFKS…LILEEKEQTN (216 aa)) are Cytoplasmic-facing. The disordered stretch occupies residues 130–171 (SGHKLGGDEGTSQTSFETSNREAAKSQNLPKPLTEFPSPAEQ). Serine 167 bears the Phosphoserine mark. Residues 187–263 (TAEEVVTVAL…GITVDTVLIL (77 aa)) form the UBX domain.

In terms of assembly, interacts with SYVN1 and VCP. As to expression, expressed abundantly in ovary and testis, and weakly in all other tissues tested.

It localises to the endoplasmic reticulum membrane. Its function is as follows. Involved in endoplasmic reticulum-associated degradation (ERAD) for misfolded lumenal proteins, possibly by tethering VCP to the endoplasmic reticulum membrane. May play a role in reproduction. The polypeptide is UBX domain-containing protein 8 (UBXN8) (Homo sapiens (Human)).